The sequence spans 115 residues: Large ribosomal subunit protein bL20 (115 aa).

This sequence belongs to the bacterial ribosomal protein bL20 family.

Its function is as follows. Binds directly to 23S ribosomal RNA and is necessary for the in vitro assembly process of the 50S ribosomal subunit. It is not involved in the protein synthesizing functions of that subunit. The chain is Large ribosomal subunit protein bL20 from Synechococcus sp. (strain CC9902).